Reading from the N-terminus, the 56-residue chain is Large ribosomal subunit protein uL30 (56 aa).

It belongs to the universal ribosomal protein uL30 family. Part of the 50S ribosomal subunit.

The polypeptide is Large ribosomal subunit protein uL30 (Nitratidesulfovibrio vulgaris (strain ATCC 29579 / DSM 644 / CCUG 34227 / NCIMB 8303 / VKM B-1760 / Hildenborough) (Desulfovibrio vulgaris)).